The primary structure comprises 547 residues: Fimbria adhesin EcpD (547 aa).

Residues 1–23 (MRVNLLIAMIIFALIWPVTALRA) form the signal peptide.

The protein belongs to the EcpD/MatE family. In terms of assembly, forms polymers. Interacts with EcpA.

The protein resides in the fimbrium. In terms of biological role, part of the ecpRABCDE operon, which encodes the E.coli common pilus (ECP). ECP is found in both commensal and pathogenic strains and plays a dual role in early-stage biofilm development and host cell recognition. Tip pilus adhesin, which is required for assembly of EcpA into fibers. The sequence is that of Fimbria adhesin EcpD (ecpD) from Escherichia coli O157:H7.